Consider the following 378-residue polypeptide: 3-dehydroquinate synthase (378 aa).

NAD(+) contacts are provided by residues 111-115 (GVIGD), 135-136 (TS), K148, and K157. Residues E190, H252, and H271 each coordinate Zn(2+).

The protein belongs to the sugar phosphate cyclases superfamily. Dehydroquinate synthase family. It depends on NAD(+) as a cofactor. Co(2+) is required as a cofactor. The cofactor is Zn(2+).

It localises to the cytoplasm. It carries out the reaction 7-phospho-2-dehydro-3-deoxy-D-arabino-heptonate = 3-dehydroquinate + phosphate. It participates in metabolic intermediate biosynthesis; chorismate biosynthesis; chorismate from D-erythrose 4-phosphate and phosphoenolpyruvate: step 2/7. Catalyzes the conversion of 3-deoxy-D-arabino-heptulosonate 7-phosphate (DAHP) to dehydroquinate (DHQ). This chain is 3-dehydroquinate synthase, found in Mesorhizobium japonicum (strain LMG 29417 / CECT 9101 / MAFF 303099) (Mesorhizobium loti (strain MAFF 303099)).